The sequence spans 261 residues: DNA repair protein RecO (261 aa).

Belongs to the RecO family.

Its function is as follows. Involved in DNA repair and RecF pathway recombination. The chain is DNA repair protein RecO from Pelodictyon phaeoclathratiforme (strain DSM 5477 / BU-1).